A 211-amino-acid polypeptide reads, in one-letter code: uncharacterized protein (211 aa).

It belongs to the A.longa ORF167/ORF288 family.

It localises to the plastid. This is an uncharacterized protein from Euglena longa (Euglenophycean alga).